The following is a 160-amino-acid chain: Large ribosomal subunit protein eL21A (160 aa).

Residue Lys-32 forms a Glycyl lysine isopeptide (Lys-Gly) (interchain with G-Cter in ubiquitin) linkage.

This sequence belongs to the eukaryotic ribosomal protein eL21 family. As to quaternary structure, component of the large ribosomal subunit (LSU). Mature yeast ribosomes consist of a small (40S) and a large (60S) subunit. The 40S small subunit contains 1 molecule of ribosomal RNA (18S rRNA) and 33 different proteins (encoded by 57 genes). The large 60S subunit contains 3 rRNA molecules (25S, 5.8S and 5S rRNA) and 46 different proteins (encoded by 81 genes).

It is found in the cytoplasm. In terms of biological role, component of the ribosome, a large ribonucleoprotein complex responsible for the synthesis of proteins in the cell. The small ribosomal subunit (SSU) binds messenger RNAs (mRNAs) and translates the encoded message by selecting cognate aminoacyl-transfer RNA (tRNA) molecules. The large subunit (LSU) contains the ribosomal catalytic site termed the peptidyl transferase center (PTC), which catalyzes the formation of peptide bonds, thereby polymerizing the amino acids delivered by tRNAs into a polypeptide chain. The nascent polypeptides leave the ribosome through a tunnel in the LSU and interact with protein factors that function in enzymatic processing, targeting, and the membrane insertion of nascent chains at the exit of the ribosomal tunnel. The chain is Large ribosomal subunit protein eL21A from Saccharomyces cerevisiae (strain ATCC 204508 / S288c) (Baker's yeast).